We begin with the raw amino-acid sequence, 319 residues long: Phenoxybenzoate dioxygenase subunit beta (319 aa).

Positions 7–109 constitute an FAD-binding FR-type domain; sequence MAPVSLRIHA…DGPSNHFALD (103 aa). 113–223 is an NAD(+) binding site; sequence PHAVFIAGGI…PARVHLEYFA (111 aa). In terms of domain architecture, 2Fe-2S ferredoxin-type spans 234-319; it reads FVVHLARSGR…SKTAELTLDL (86 aa). [2Fe-2S] cluster is bound by residues Cys268, Cys273, Cys276, and Cys306.

Belongs to the PDR/VanB family. In terms of assembly, this dioxygenase system consists of two proteins: the alpha subunit (PobA) and a subunit (PobB) that acts as a ferredoxin and a ferredoxin reductase. FMN is required as a cofactor.

The protein operates within aromatic compound metabolism; carboxydiphenyl ether degradation. Its function is as follows. Degrades exclusively diarylether compounds having carboxyl groups in the 3- or 4-position. Yields a hemiacetal that spontaneously hydrolyzes to phenol and protocatechuate. This chain is Phenoxybenzoate dioxygenase subunit beta (pobB), found in Ectopseudomonas oleovorans (Pseudomonas oleovorans).